The primary structure comprises 508 residues: D-alanine--D-alanyl carrier protein ligase (508 aa).

152–153 (TS) contacts ATP. Asp198 is a binding site for D-alanine. An ATP-binding site is contributed by 293–298 (NTYGPT). D-alanine is bound at residue Val302. ATP contacts are provided by residues Asp384, 396 to 399 (YRGR), and Lys495. Residue Lys495 coordinates D-alanine.

Belongs to the ATP-dependent AMP-binding enzyme family. DltA subfamily.

The protein localises to the cytoplasm. The enzyme catalyses holo-[D-alanyl-carrier protein] + D-alanine + ATP = D-alanyl-[D-alanyl-carrier protein] + AMP + diphosphate. Its pathway is cell wall biogenesis; lipoteichoic acid biosynthesis. Its function is as follows. Catalyzes the first step in the D-alanylation of lipoteichoic acid (LTA), the activation of D-alanine and its transfer onto the D-alanyl carrier protein (Dcp) DltC. In an ATP-dependent two-step reaction, forms a high energy D-alanyl-AMP intermediate, followed by transfer of the D-alanyl residue as a thiol ester to the phosphopantheinyl prosthetic group of the Dcp. D-alanylation of LTA plays an important role in modulating the properties of the cell wall in Gram-positive bacteria, influencing the net charge of the cell wall. In Lactiplantibacillus plantarum (strain ATCC BAA-793 / NCIMB 8826 / WCFS1) (Lactobacillus plantarum), this protein is D-alanine--D-alanyl carrier protein ligase.